A 351-amino-acid chain; its full sequence is 4-hydroxy-3-methylbut-2-enyl diphosphate reductase (351 aa).

Cys18 contacts [4Fe-4S] cluster. (2E)-4-hydroxy-3-methylbut-2-enyl diphosphate is bound by residues His47 and His83. His47 and His83 together coordinate dimethylallyl diphosphate. Isopentenyl diphosphate-binding residues include His47 and His83. Cys105 is a binding site for [4Fe-4S] cluster. Position 133 (His133) interacts with (2E)-4-hydroxy-3-methylbut-2-enyl diphosphate. Position 133 (His133) interacts with dimethylallyl diphosphate. An isopentenyl diphosphate-binding site is contributed by His133. Residue Glu135 is the Proton donor of the active site. (2E)-4-hydroxy-3-methylbut-2-enyl diphosphate is bound at residue Thr174. Cys204 provides a ligand contact to [4Fe-4S] cluster. 4 residues coordinate (2E)-4-hydroxy-3-methylbut-2-enyl diphosphate: Ser232, Ser233, Asn234, and Ser277. Residues Ser232, Ser233, Asn234, and Ser277 each coordinate dimethylallyl diphosphate. Isopentenyl diphosphate contacts are provided by Ser232, Ser233, Asn234, and Ser277.

The protein belongs to the IspH family. [4Fe-4S] cluster serves as cofactor.

The catalysed reaction is isopentenyl diphosphate + 2 oxidized [2Fe-2S]-[ferredoxin] + H2O = (2E)-4-hydroxy-3-methylbut-2-enyl diphosphate + 2 reduced [2Fe-2S]-[ferredoxin] + 2 H(+). It catalyses the reaction dimethylallyl diphosphate + 2 oxidized [2Fe-2S]-[ferredoxin] + H2O = (2E)-4-hydroxy-3-methylbut-2-enyl diphosphate + 2 reduced [2Fe-2S]-[ferredoxin] + 2 H(+). It participates in isoprenoid biosynthesis; dimethylallyl diphosphate biosynthesis; dimethylallyl diphosphate from (2E)-4-hydroxy-3-methylbutenyl diphosphate: step 1/1. It functions in the pathway isoprenoid biosynthesis; isopentenyl diphosphate biosynthesis via DXP pathway; isopentenyl diphosphate from 1-deoxy-D-xylulose 5-phosphate: step 6/6. Its function is as follows. Catalyzes the conversion of 1-hydroxy-2-methyl-2-(E)-butenyl 4-diphosphate (HMBPP) into a mixture of isopentenyl diphosphate (IPP) and dimethylallyl diphosphate (DMAPP). Acts in the terminal step of the DOXP/MEP pathway for isoprenoid precursor biosynthesis. This is 4-hydroxy-3-methylbut-2-enyl diphosphate reductase from Bartonella tribocorum (strain CIP 105476 / IBS 506).